The chain runs to 1035 residues: Probable LRR receptor-like serine/threonine-protein kinase At1g53440 (1035 aa).

Positions methionine 1–alanine 26 are cleaved as a signal peptide. The Extracellular portion of the chain corresponds to glutamine 27–glycine 607. N-linked (GlcNAc...) asparagine glycans are attached at residues asparagine 46, asparagine 75, asparagine 83, and asparagine 110. 7 LRR repeats span residues valine 87–asparagine 110, leucine 111–isoleucine 135, leucine 137–isoleucine 158, threonine 160–leucine 182, arginine 183–leucine 206, asparagine 208–arginine 232, and valine 234–leucine 254. Residues asparagine 194, asparagine 208, and asparagine 229 are each glycosylated (N-linked (GlcNAc...) asparagine). N-linked (GlcNAc...) asparagine glycans are attached at residues asparagine 256 and asparagine 277. LRR repeat units lie at residues methionine 278–serine 302, methionine 303–serine 326, asparagine 328–leucine 349, and aspartate 350–glutamine 372. 6 N-linked (GlcNAc...) asparagine glycosylation sites follow: asparagine 317, asparagine 337, asparagine 361, asparagine 386, asparagine 469, and asparagine 559. The chain crosses the membrane as a helical span at residues valine 608–leucine 628. The Cytoplasmic segment spans residues arginine 629–glutamate 1035. A Phosphothreonine modification is found at threonine 656. The region spanning phenylalanine 667–leucine 948 is the Protein kinase domain. ATP is bound by residues isoleucine 673–valine 681 and lysine 695. Tyrosine 740 carries the phosphotyrosine modification. Residue aspartate 793 is the Proton acceptor of the active site. At serine 826 the chain carries Phosphoserine. Phosphothreonine is present on residues threonine 827 and threonine 832. Tyrosine 840 carries the post-translational modification Phosphotyrosine. The tract at residues leucine 969–glutamate 1035 is disordered. Positions aspartate 972–threonine 981 are enriched in polar residues. A compositionally biased stretch (low complexity) spans serine 1009–arginine 1023.

This sequence belongs to the protein kinase superfamily. Ser/Thr protein kinase family.

Its subcellular location is the cell membrane. It carries out the reaction L-seryl-[protein] + ATP = O-phospho-L-seryl-[protein] + ADP + H(+). The enzyme catalyses L-threonyl-[protein] + ATP = O-phospho-L-threonyl-[protein] + ADP + H(+). This chain is Probable LRR receptor-like serine/threonine-protein kinase At1g53440, found in Arabidopsis thaliana (Mouse-ear cress).